The following is a 1008-amino-acid chain: Probable pre-mRNA-splicing factor ATP-dependent RNA helicase mog-4 (1008 aa).

Disordered regions lie at residues 104–146 (SSTK…SESD) and 169–202 (NKKE…REES). The segment covering 127 to 137 (KASKPGKSVKP) has biased composition (low complexity). One can recognise a Helicase ATP-binding domain in the interval 374-538 (IEAVKEHQVL…FDDAPIFRIP (165 aa)). Residue 387–394 (GETGSGKT) coordinates ATP. The DEAH box motif lies at 485 to 488 (DEAH). The region spanning 563–737 (TIMQIHLTQP…NVVLMLKSLG (175 aa)) is the Helicase C-terminal domain. The segment at 988–1008 (EDATNKKMPKNKGKSGKDLER) is disordered.

Belongs to the DEAD box helicase family. DEAH subfamily. DDX16/PRP8 sub-subfamily. In terms of assembly, interacts with mep-1 and smn-1.

Its subcellular location is the nucleus. It catalyses the reaction ATP + H2O = ADP + phosphate + H(+). ATP-binding RNA helicase involved in pre-mRNA splicing. Operates during embryogenesis. In Caenorhabditis elegans, this protein is Probable pre-mRNA-splicing factor ATP-dependent RNA helicase mog-4 (mog-4).